We begin with the raw amino-acid sequence, 354 residues long: Large ribosomal subunit protein uL10 (354 aa).

Acidic residues-rich tracts occupy residues 286–296 and 307–345; these read DEEALPEELQD and AEAD…DGDG. Positions 286 to 354 are disordered; it reads DEEALPEELQ…GGDALGDMFG (69 aa).

Belongs to the universal ribosomal protein uL10 family. In terms of assembly, part of the 50S ribosomal subunit. Forms part of the ribosomal stalk which helps the ribosome interact with GTP-bound translation factors. Forms a heptameric L10(L12)2(L12)2(L12)2 complex, where L10 forms an elongated spine to which the L12 dimers bind in a sequential fashion.

Its function is as follows. Forms part of the ribosomal stalk, playing a central role in the interaction of the ribosome with GTP-bound translation factors. This chain is Large ribosomal subunit protein uL10, found in Natronomonas pharaonis (strain ATCC 35678 / DSM 2160 / CIP 103997 / JCM 8858 / NBRC 14720 / NCIMB 2260 / Gabara) (Halobacterium pharaonis).